A 192-amino-acid chain; its full sequence is Transcription termination/antitermination protein NusG (192 aa).

Positions 140-168 constitute a KOW domain; sequence VGEVVTVTDGPFETFMGTVEEIDKERNRL.

It belongs to the NusG family.

Functionally, participates in transcription elongation, termination and antitermination. This Rickettsia typhi (strain ATCC VR-144 / Wilmington) protein is Transcription termination/antitermination protein NusG.